Reading from the N-terminus, the 308-residue chain is Membrane protein insertase YidC 1 (308 aa).

The first 22 residues, 1–22 (MKSIKRFALSAMGVAMLLVLTG), serve as a signal peptide directing secretion. A lipid anchor (N-palmitoyl cysteine) is attached at C23. Residue C23 is the site of S-diacylglycerol cysteine attachment. Transmembrane regions (helical) follow at residues 60–80 (FGVA…PLGI), 135–155 (FGGV…AIYF), 168–188 (YLGI…GVLY), 211–226 (MIYM…SLFS), and 232–252 (LYWV…NYIV). A disordered region spans residues 263-308 (ELAKNPPKASAFSKPSGRKDVTPEQPTAITSKKKHKNRNAGKQRSR). Over residues 293 to 308 (SKKKHKNRNAGKQRSR) the composition is skewed to basic residues.

It belongs to the OXA1/ALB3/YidC family. Type 2 subfamily.

It is found in the cell membrane. Required for the insertion and/or proper folding and/or complex formation of integral membrane proteins into the membrane. Involved in integration of membrane proteins that insert both dependently and independently of the Sec translocase complex, as well as at least some lipoproteins. In Streptococcus pneumoniae serotype 4 (strain ATCC BAA-334 / TIGR4), this protein is Membrane protein insertase YidC 1.